A 301-amino-acid chain; its full sequence is Probable alpha-L-glutamate ligase 1 (301 aa).

In terms of domain architecture, ATP-grasp spans Leu-104–Glu-287. ATP is bound by residues Lys-141, Glu-178–Tyr-179, Asp-187, and Arg-211–Asn-213. Residues Asp-248, Glu-260, and Asn-262 each contribute to the Mg(2+) site. Mn(2+) contacts are provided by Asp-248, Glu-260, and Asn-262.

It belongs to the RimK family. Requires Mg(2+) as cofactor. Mn(2+) serves as cofactor.

The polypeptide is Probable alpha-L-glutamate ligase 1 (Shewanella frigidimarina (strain NCIMB 400)).